A 426-amino-acid polypeptide reads, in one-letter code: D-tagatose-1,6-bisphosphate aldolase subunit KbaZ (426 aa).

Belongs to the GatZ/KbaZ family. KbaZ subfamily. In terms of assembly, forms a complex with KbaY.

The protein operates within carbohydrate metabolism; D-tagatose 6-phosphate degradation; D-glyceraldehyde 3-phosphate and glycerone phosphate from D-tagatose 6-phosphate: step 2/2. Component of the tagatose-1,6-bisphosphate aldolase KbaYZ that is required for full activity and stability of the Y subunit. Could have a chaperone-like function for the proper and stable folding of KbaY. When expressed alone, KbaZ does not show any aldolase activity. This chain is D-tagatose-1,6-bisphosphate aldolase subunit KbaZ, found in Escherichia coli O127:H6 (strain E2348/69 / EPEC).